Here is a 446-residue protein sequence, read N- to C-terminus: Cytochrome P450 monooxygenase ATR14 (446 aa).

Residues 403 to 446 form a disordered region; sequence NFTYPDEFRPDRWLDDRDQKEYEHDHGDAMQPFSVGPRDCPSQK. Over residues 408–430 the composition is skewed to basic and acidic residues; it reads DEFRPDRWLDDRDQKEYEHDHGD. Position 442 (C442) interacts with heme.

This sequence belongs to the cytochrome P450 family. Heme serves as cofactor.

It participates in mycotoxin biosynthesis. Cytochrome P450 monooxygenase; part of the core atranone cluster (CAC) which products are predicted to catalyze most or all steps of mycotoxin atranone synthesis, starting from geranylgeranyl pyrophosphate (GGPP). The initial cyclization of GGPP to dolabellane is probably performed by the terpene cyclase ATR13. The Baeyer-Villiger oxidation near the end of the atranone synthesis, which converts atranones D and E to atranones F and G is predicted to be catalyzed by the monooxygenase ATR8. Of the CAC's other predicted gene products, the reducing PKS ATR6 might synthesize a polyketide chain. This polyketide is probably transferred onto the atranone backbone by the polyketide transferase ATR5. Other predicted CAC products include 4 oxygenases (ATR2, ATR3, ATR4, and ATR14), 3 short-chain reductases (ATR7, ATR9, and ATR10), and a methyltransferase (ATR12). These may all be involved in the various steps of atranone biosynthesis, although their specific roles must await experimental determination. This chain is Cytochrome P450 monooxygenase ATR14, found in Stachybotrys chlorohalonatus (strain IBT 40285).